Here is a 419-residue protein sequence, read N- to C-terminus: ATP-dependent RNA helicase RhlB (419 aa).

The Q motif motif lies at 9 to 37; that stretch reads QRFSDLALHRSVQQAIKEKGFEFCTPIQA. The Helicase ATP-binding domain occupies 40–217; sequence LPITLKGQDI…FEHMNDPQYV (178 aa). An ATP-binding site is contributed by 53–60; sequence AQTGTGKT. The short motif at 163–166 is the DEAD box element; sequence DEAD. The Helicase C-terminal domain occupies 241-388; that stretch reads KMALLMTLLE…VSQYDAKALI (148 aa).

It belongs to the DEAD box helicase family. RhlB subfamily. Component of the RNA degradosome, which is a multiprotein complex involved in RNA processing and mRNA degradation.

The protein resides in the cytoplasm. The enzyme catalyses ATP + H2O = ADP + phosphate + H(+). In terms of biological role, DEAD-box RNA helicase involved in RNA degradation. Has RNA-dependent ATPase activity and unwinds double-stranded RNA. The sequence is that of ATP-dependent RNA helicase RhlB from Histophilus somni (strain 129Pt) (Haemophilus somnus).